We begin with the raw amino-acid sequence, 303 residues long: Elongation factor Ts (303 aa).

An involved in Mg(2+) ion dislocation from EF-Tu region spans residues 80 to 83 (TDFV).

Belongs to the EF-Ts family.

It is found in the cytoplasm. Functionally, associates with the EF-Tu.GDP complex and induces the exchange of GDP to GTP. It remains bound to the aminoacyl-tRNA.EF-Tu.GTP complex up to the GTP hydrolysis stage on the ribosome. The chain is Elongation factor Ts from Clostridium perfringens (strain ATCC 13124 / DSM 756 / JCM 1290 / NCIMB 6125 / NCTC 8237 / Type A).